We begin with the raw amino-acid sequence, 2067 residues long: Lipoxygenase homology domain-containing protein 1 (2067 aa).

15 consecutive PLAT domains span residues 43–160 (RVYE…RDLL), 172–287 (NKYE…RDIL), 296–412 (ITYI…RQLY), 425–540 (FPWS…REMT), 553–673 (ARYH…RELL), 684–803 (FRYH…VELY), 814–934 (VHYE…RELL), 969–1087 (TTFS…RDLF), 1100–1225 (VPYE…RELV), 1254–1372 (VLYS…RLFY), 1421–1539 (IPYY…RVFD), 1552–1667 (VLYE…CEMC), 1679–1797 (TSYT…RDFA), 1810–1931 (TTYE…VFEV), and 1948–2064 (VKYE…RDLF).

The protein resides in the cell projection. It localises to the stereocilium. Its function is as follows. Involved in hearing. Required for normal function of hair cells in the inner ear. This chain is Lipoxygenase homology domain-containing protein 1 (LOXHD1), found in Homo sapiens (Human).